Here is a 635-residue protein sequence, read N- to C-terminus: Extracellular metalloproteinase 9 (635 aa).

Residues 1 to 19 form the signal peptide; sequence MHGLLLAAGLLTLPLRALA. The propeptide occupies 20 to 246; the sequence is HPGHQSTSIL…IHGVTDYVAD (227 aa). N274 carries N-linked (GlcNAc...) asparagine glycosylation. The interval 279 to 307 is disordered; the sequence is TWHSDGNTRYPTTRGNNGIAQDNPSGGTG. N413 carries an N-linked (GlcNAc...) asparagine glycan. Position 430 (H430) interacts with Zn(2+). Residue E431 is part of the active site. A Zn(2+)-binding site is contributed by H434. A glycan (N-linked (GlcNAc...) asparagine) is linked at N475.

Belongs to the peptidase M36 family. Zn(2+) is required as a cofactor.

It localises to the secreted. In terms of biological role, secreted metalloproteinase that allows assimilation of proteinaceous substrates. This chain is Extracellular metalloproteinase 9 (MEP9), found in Uncinocarpus reesii (strain UAMH 1704).